A 458-amino-acid chain; its full sequence is ATP synthase subunit beta (458 aa).

Position 148–155 (148–155 (GGAGVGKT)) interacts with ATP.

This sequence belongs to the ATPase alpha/beta chains family. As to quaternary structure, F-type ATPases have 2 components, CF(1) - the catalytic core - and CF(0) - the membrane proton channel. CF(1) has five subunits: alpha(3), beta(3), gamma(1), delta(1), epsilon(1). CF(0) has three main subunits: a(1), b(2) and c(9-12). The alpha and beta chains form an alternating ring which encloses part of the gamma chain. CF(1) is attached to CF(0) by a central stalk formed by the gamma and epsilon chains, while a peripheral stalk is formed by the delta and b chains.

It is found in the cell inner membrane. The enzyme catalyses ATP + H2O + 4 H(+)(in) = ADP + phosphate + 5 H(+)(out). Produces ATP from ADP in the presence of a proton gradient across the membrane. The catalytic sites are hosted primarily by the beta subunits. The protein is ATP synthase subunit beta of Pseudomonas putida (strain ATCC 700007 / DSM 6899 / JCM 31910 / BCRC 17059 / LMG 24140 / F1).